A 64-amino-acid polypeptide reads, in one-letter code: Large ribosomal subunit protein bL35 (64 aa).

A disordered region spans residues 1–43 (MPKMKSKKSLAKRVIAKKNGTLKRGKAYRSHRATGKTTKQKRH).

It belongs to the bacterial ribosomal protein bL35 family.

The protein is Large ribosomal subunit protein bL35 of Mesoplasma florum (strain ATCC 33453 / NBRC 100688 / NCTC 11704 / L1) (Acholeplasma florum).